Here is a 365-residue protein sequence, read N- to C-terminus: Peptide chain release factor 2 (365 aa).

An N5-methylglutamine modification is found at Gln252.

This sequence belongs to the prokaryotic/mitochondrial release factor family. Post-translationally, methylated by PrmC. Methylation increases the termination efficiency of RF2.

It is found in the cytoplasm. Its function is as follows. Peptide chain release factor 2 directs the termination of translation in response to the peptide chain termination codons UGA and UAA. This chain is Peptide chain release factor 2, found in Escherichia coli O8 (strain IAI1).